We begin with the raw amino-acid sequence, 311 residues long: Pyrimidine-specific ribonucleoside hydrolase RihA (311 aa).

H240 is a catalytic residue.

The protein belongs to the IUNH family. RihA subfamily.

Its function is as follows. Hydrolyzes with equal efficiency cytidine or uridine to ribose and cytosine or uracil, respectively. This is Pyrimidine-specific ribonucleoside hydrolase RihA from Escherichia coli O127:H6 (strain E2348/69 / EPEC).